Here is a 142-residue protein sequence, read N- to C-terminus: Large ribosomal subunit protein uL13 (142 aa).

The protein belongs to the universal ribosomal protein uL13 family. Part of the 50S ribosomal subunit.

In terms of biological role, this protein is one of the early assembly proteins of the 50S ribosomal subunit, although it is not seen to bind rRNA by itself. It is important during the early stages of 50S assembly. The protein is Large ribosomal subunit protein uL13 of Psychrobacter cryohalolentis (strain ATCC BAA-1226 / DSM 17306 / VKM B-2378 / K5).